Consider the following 164-residue polypeptide: Cyanate hydratase (164 aa).

Active-site residues include Arg-90, Glu-93, and Ser-116.

The protein belongs to the cyanase family.

It carries out the reaction cyanate + hydrogencarbonate + 3 H(+) = NH4(+) + 2 CO2. Its function is as follows. Catalyzes the reaction of cyanate with bicarbonate to produce ammonia and carbon dioxide. The protein is Cyanate hydratase of Vitis vinifera (Grape).